The sequence spans 85 residues: Beta-toxin BmKAs1 (85 aa).

An N-terminal signal peptide occupies residues 1–19 (MKIIIFLIVCSFVLIGVKA). Residues 20–82 (DNGYLLNKYT…LWAYETNKCN (63 aa)) form the LCN-type CS-alpha/beta domain. 4 cysteine pairs are disulfide-bonded: Cys-31-Cys-81, Cys-35-Cys-56, Cys-42-Cys-63, and Cys-46-Cys-65.

This sequence belongs to the long (4 C-C) scorpion toxin superfamily. Sodium channel inhibitor family. Post-translationally, a possible sulfoxide Met-85 on BmP09 could explain the difference of function between BmK AS-1 and BmP09. In terms of tissue distribution, expressed by the venom gland.

The protein localises to the secreted. In terms of biological role, beta toxins bind voltage-independently at site-4 of sodium channels (Nav) and shift the voltage of activation toward more negative potentials thereby affecting sodium channel activation and promoting spontaneous and repetitive firing. BmKAs1 also significantly stimulates the binding of [3H]-ryanodine to ryanodine receptors on the sarcoplasmic reticulum of the skeletal muscle. It also displays antinociceptive effect in rat models. Toxin BmP09 (which may be post-translationally modified) specifically and reversibly blocks large conductance calcium-dependent and voltage-dependent potassium channels (BK) but has no effect on sodium channels. The sequence is that of Beta-toxin BmKAs1 from Olivierus martensii (Manchurian scorpion).